Reading from the N-terminus, the 523-residue chain is Acetyl-CoA hydrolase (523 aa).

Residue 277–281 participates in CoA binding; it reads GIGNI. The active-site 5-glutamyl coenzyme A thioester intermediate is the Glu-302. CoA is bound by residues Asn-392 and Gly-396.

This sequence belongs to the acetyl-CoA hydrolase/transferase family.

The protein localises to the cytoplasm. The enzyme catalyses acetyl-CoA + H2O = acetate + CoA + H(+). Presumably involved in regulating the intracellular acetyl-CoA pool for fatty acid and cholesterol synthesis and fatty acid oxidation. The protein is Acetyl-CoA hydrolase (ACH1) of Eremothecium gossypii (strain ATCC 10895 / CBS 109.51 / FGSC 9923 / NRRL Y-1056) (Yeast).